A 146-amino-acid polypeptide reads, in one-letter code: Probable cyclic pyranopterin monophosphate synthase (146 aa).

Substrate contacts are provided by residues 66–68 and 102–103; these read LTH and ME. Asp117 is an active-site residue.

This sequence belongs to the MoaC family. In terms of assembly, homohexamer; trimer of dimers.

It carries out the reaction (8S)-3',8-cyclo-7,8-dihydroguanosine 5'-triphosphate = cyclic pyranopterin phosphate + diphosphate. It functions in the pathway cofactor biosynthesis; molybdopterin biosynthesis. In terms of biological role, catalyzes the conversion of (8S)-3',8-cyclo-7,8-dihydroguanosine 5'-triphosphate to cyclic pyranopterin monophosphate (cPMP). The chain is Probable cyclic pyranopterin monophosphate synthase from Aeropyrum pernix (strain ATCC 700893 / DSM 11879 / JCM 9820 / NBRC 100138 / K1).